A 101-amino-acid polypeptide reads, in one-letter code: Small ribosomal subunit protein uS14 (101 aa).

It belongs to the universal ribosomal protein uS14 family. In terms of assembly, part of the 30S ribosomal subunit. Contacts proteins S3 and S10.

Its function is as follows. Binds 16S rRNA, required for the assembly of 30S particles and may also be responsible for determining the conformation of the 16S rRNA at the A site. This chain is Small ribosomal subunit protein uS14, found in Marinobacter nauticus (strain ATCC 700491 / DSM 11845 / VT8) (Marinobacter aquaeolei).